The chain runs to 1131 residues: RNA2 polyprotein (1131 aa).

The tract at residues 213 to 236 (ALRTHPGGPALPPLPPPPPIQKPP) is disordered. Residues 221 to 234 (PALPPLPPPPPIQK) show a composition bias toward pro residues.

The protein belongs to the nepoviruses RNA2 polyprotein family. In terms of processing, specific enzymatic cleavages in vivo by the P1 encoded 3C-like protease yield mature proteins.

The protein resides in the host cell junction. Its subcellular location is the host plasmodesma. The protein localises to the virion. Its function is as follows. Implicated in RNA2 replication. Could also be required for nematode transmission of the virus. In terms of biological role, transports viral genome to neighboring plant cells directly through plasmosdesmata, without any budding. The movement protein allows efficient cell to cell propagation, by bypassing the host cell wall barrier. Acts by forming a tubular structure at the host plasmodesmata, enlarging it enough to allow free passage of virion capsids. The sequence is that of RNA2 polyprotein from Vitis vinifera (Grape).